Reading from the N-terminus, the 196-residue chain is MFQLLSFLLSGEATAVERIITDACPVYAPFFGAMGVTAALVFTVMGAAYGTAKASVGISNMGVMKPDLVIKAFIPVIFAGVIAIYGLIICVILVGGIKPNANYTLMKSFTDLGAGLTVGLCGLAAGMAIGIVGDSGVRAFGQQPKLYVIMMLILIFSEALGLYGLIIGILLSSVSDTYCPGQALVPLNSGNVIGKN.

Over 1-25 (MFQLLSFLLSGEATAVERIITDACP) the chain is Lumenal. The chain crosses the membrane as a helical span at residues 26-46 (VYAPFFGAMGVTAALVFTVMG). Topologically, residues 47–72 (AAYGTAKASVGISNMGVMKPDLVIKA) are cytoplasmic. Residues 73–93 (FIPVIFAGVIAIYGLIICVIL) form a helical membrane-spanning segment. Residues 94-111 (VGGIKPNANYTLMKSFTD) lie on the Lumenal side of the membrane. Residues 112-132 (LGAGLTVGLCGLAAGMAIGIV) traverse the membrane as a helical segment. At 133–150 (GDSGVRAFGQQPKLYVIM) the chain is on the cytoplasmic side. Residues 151–171 (MLILIFSEALGLYGLIIGILL) form a helical membrane-spanning segment. The Lumenal portion of the chain corresponds to 172-196 (SSVSDTYCPGQALVPLNSGNVIGKN).

Belongs to the V-ATPase proteolipid subunit family. In terms of assembly, V-ATPase is a heteromultimeric enzyme composed of a peripheral catalytic V1 complex (main components: subunits A, B, C, D, E, and F) attached to an integral membrane V0 proton pore complex (main component: the proteolipid protein; which is present as a hexamer that forms the proton-conducting pore).

Its subcellular location is the vacuole membrane. Proton-conducting pore forming subunit of the membrane integral V0 complex of vacuolar ATPase. V-ATPase is responsible for acidifying a variety of intracellular compartments in eukaryotic cells. This chain is V-type proton ATPase proteolipid subunit (vatP), found in Dictyostelium discoideum (Social amoeba).